The chain runs to 82 residues: Savignygrin (+) (82 aa).

The first 21 residues, 1-21 (MQANIFVFAFLLLSVAVAAYG), serve as a signal peptide directing secretion. Cystine bridges form between Cys-26-Cys-79, Cys-34-Cys-59, and Cys-53-Cys-75. A Cell attachment site motif is present at residues 35 to 37 (RGD).

In terms of tissue distribution, expressed in salivary glands.

It localises to the cytoplasmic vesicle. Its subcellular location is the secretory vesicle. It is found in the secreted. Functionally, tick salivary platelet aggregation inhibitor that plays an important part in the anti-hemostatic strategy of ticks. Inhibits platelet aggregation induced by ADP (IC(50)=130 nM), collagen, the thrombin receptor-activating peptide, and epinephrine, although platelets are activated and their shape changed. Binding to platelets is similar for resting and activated platelets (Kd=50-70 nM). Acts by specifically binding to platelet membrane glycoprotein IIb-IIIa (ITGA2B/ITGB3) in a divalent metal ion dependent manner. In contrast to many disintegrins which only interacts with the beta-3 subunit, this protein interacts with the two subunits (alpha-IIb and beta-3). Also causes disaggregation of aggregated platelets without influencing the activated spherical shape associated with aggregated platelets and causes a decrease in the number of pseudopodia on the activated platelet surface. Does not show any inhibitory activity for the different serine proteases tested. The chain is Savignygrin (+) from Ornithodoros kalahariensis (Tick).